The primary structure comprises 341 residues: Chitin synthase 3 complex protein CSI2 (341 aa).

The segment covering 35 to 70 (SSSTKAADSSSKGSSSAKTTTSLGKSSVTSKDVSSS) has biased composition (low complexity). Disordered regions lie at residues 35–78 (SSST…SSTK), 272–291 (DSLS…GKFT), and 298–341 (NYTS…DGKE).

Its function is as follows. Appears to be a structural component of the chitin synthase 3 complex. The sequence is that of Chitin synthase 3 complex protein CSI2 (CSI2) from Saccharomyces cerevisiae (strain ATCC 204508 / S288c) (Baker's yeast).